The primary structure comprises 427 residues: Trigger factor (427 aa).

A PPIase FKBP-type domain is found at 165–250; sequence GDTVVIDFEG…LHEIQEQVPA (86 aa).

It belongs to the FKBP-type PPIase family. Tig subfamily.

Its subcellular location is the cytoplasm. The catalysed reaction is [protein]-peptidylproline (omega=180) = [protein]-peptidylproline (omega=0). Involved in protein export. Acts as a chaperone by maintaining the newly synthesized protein in an open conformation. Functions as a peptidyl-prolyl cis-trans isomerase. This is Trigger factor from Sulfurovum sp. (strain NBC37-1).